We begin with the raw amino-acid sequence, 353 residues long: ATP-dependent kinase YFH7 (353 aa).

An ATP-binding site is contributed by 31-39; that stretch reads GSPGSGKST.

It belongs to the YFH7 family.

Its function is as follows. ATP-dependent kinase that could be involved in endoplasmic reticulum membrane assembly. The polypeptide is ATP-dependent kinase YFH7 (YFH7) (Saccharomyces cerevisiae (strain RM11-1a) (Baker's yeast)).